The chain runs to 259 residues: Pyridoxine 5'-phosphate synthase (259 aa).

Position 6 (Asn6) interacts with 3-amino-2-oxopropyl phosphate. 8–9 serves as a coordination point for 1-deoxy-D-xylulose 5-phosphate; that stretch reads DH. Residue Arg17 participates in 3-amino-2-oxopropyl phosphate binding. The Proton acceptor role is filled by His42. Residues Arg44 and His49 each coordinate 1-deoxy-D-xylulose 5-phosphate. Glu69 serves as the catalytic Proton acceptor. Position 99 (Thr99) interacts with 1-deoxy-D-xylulose 5-phosphate. His212 (proton donor) is an active-site residue. 3-amino-2-oxopropyl phosphate is bound by residues Gly213 and 234-235; that span reads GH.

The protein belongs to the PNP synthase family. Homooctamer; tetramer of dimers.

The protein resides in the cytoplasm. The catalysed reaction is 3-amino-2-oxopropyl phosphate + 1-deoxy-D-xylulose 5-phosphate = pyridoxine 5'-phosphate + phosphate + 2 H2O + H(+). It participates in cofactor biosynthesis; pyridoxine 5'-phosphate biosynthesis; pyridoxine 5'-phosphate from D-erythrose 4-phosphate: step 5/5. Its function is as follows. Catalyzes the complicated ring closure reaction between the two acyclic compounds 1-deoxy-D-xylulose-5-phosphate (DXP) and 3-amino-2-oxopropyl phosphate (1-amino-acetone-3-phosphate or AAP) to form pyridoxine 5'-phosphate (PNP) and inorganic phosphate. The protein is Pyridoxine 5'-phosphate synthase of Nautilia profundicola (strain ATCC BAA-1463 / DSM 18972 / AmH).